A 329-amino-acid polypeptide reads, in one-letter code: Beta-ketoacyl-[acyl-carrier-protein] synthase III (329 aa).

Active-site residues include Cys113 and His256. Residues 257–261 form an ACP-binding region; the sequence is QANQR. Residue Asn286 is part of the active site.

This sequence belongs to the thiolase-like superfamily. FabH family. Homodimer.

It localises to the cytoplasm. The enzyme catalyses malonyl-[ACP] + acetyl-CoA + H(+) = 3-oxobutanoyl-[ACP] + CO2 + CoA. The protein operates within lipid metabolism; fatty acid biosynthesis. Its function is as follows. Catalyzes the condensation reaction of fatty acid synthesis by the addition to an acyl acceptor of two carbons from malonyl-ACP. Catalyzes the first condensation reaction which initiates fatty acid synthesis and may therefore play a role in governing the total rate of fatty acid production. Possesses both acetoacetyl-ACP synthase and acetyl transacylase activities. Its substrate specificity determines the biosynthesis of branched-chain and/or straight-chain of fatty acids. This Natranaerobius thermophilus (strain ATCC BAA-1301 / DSM 18059 / JW/NM-WN-LF) protein is Beta-ketoacyl-[acyl-carrier-protein] synthase III.